Here is a 398-residue protein sequence, read N- to C-terminus: Nicotinate phosphoribosyltransferase (398 aa).

H222 carries the phosphohistidine; by autocatalysis modification.

This sequence belongs to the NAPRTase family. Transiently phosphorylated on a His residue during the reaction cycle. Phosphorylation strongly increases the affinity for substrates and increases the rate of nicotinate D-ribonucleotide production. Dephosphorylation regenerates the low-affinity form of the enzyme, leading to product release.

It carries out the reaction nicotinate + 5-phospho-alpha-D-ribose 1-diphosphate + ATP + H2O = nicotinate beta-D-ribonucleotide + ADP + phosphate + diphosphate. The protein operates within cofactor biosynthesis; NAD(+) biosynthesis; nicotinate D-ribonucleotide from nicotinate: step 1/1. Catalyzes the synthesis of beta-nicotinate D-ribonucleotide from nicotinate and 5-phospho-D-ribose 1-phosphate at the expense of ATP. The sequence is that of Nicotinate phosphoribosyltransferase from Acidovorax ebreus (strain TPSY) (Diaphorobacter sp. (strain TPSY)).